A 370-amino-acid polypeptide reads, in one-letter code: Anhydro-N-acetylmuramic acid kinase (370 aa).

Gly13 to Asp20 lines the ATP pocket.

The protein belongs to the anhydro-N-acetylmuramic acid kinase family.

It catalyses the reaction 1,6-anhydro-N-acetyl-beta-muramate + ATP + H2O = N-acetyl-D-muramate 6-phosphate + ADP + H(+). It functions in the pathway amino-sugar metabolism; 1,6-anhydro-N-acetylmuramate degradation. It participates in cell wall biogenesis; peptidoglycan recycling. In terms of biological role, catalyzes the specific phosphorylation of 1,6-anhydro-N-acetylmuramic acid (anhMurNAc) with the simultaneous cleavage of the 1,6-anhydro ring, generating MurNAc-6-P. Is required for the utilization of anhMurNAc either imported from the medium or derived from its own cell wall murein, and thus plays a role in cell wall recycling. The protein is Anhydro-N-acetylmuramic acid kinase of Vibrio cholerae serotype O1 (strain ATCC 39315 / El Tor Inaba N16961).